A 548-amino-acid polypeptide reads, in one-letter code: Membrane protein insertase YidC (548 aa).

The helical transmembrane segment at 6–26 (NLLVIALLFVSFMIWQAWEQD) threads the bilayer. A disordered region spans residues 28–56 (NPQPQTQQTTQTTTTAAGSAADQGVPASG). A compositionally biased stretch (low complexity) spans 29 to 42 (PQPQTQQTTQTTTT). The next 4 helical transmembrane spans lie at 350–370 (FVGNWGFSIIIITFIVRGIMY), 424–444 (FPLIIQMPIFLALYYMLMGSI), 458–478 (LSAQDPYYILPILMGVTMFFI), and 499–519 (PVIFTVFFLWFPSGLVLYYIV).

This sequence belongs to the OXA1/ALB3/YidC family. Type 1 subfamily. As to quaternary structure, interacts with the Sec translocase complex via SecD. Specifically interacts with transmembrane segments of nascent integral membrane proteins during membrane integration.

It is found in the cell inner membrane. Its function is as follows. Required for the insertion and/or proper folding and/or complex formation of integral membrane proteins into the membrane. Involved in integration of membrane proteins that insert both dependently and independently of the Sec translocase complex, as well as at least some lipoproteins. Aids folding of multispanning membrane proteins. The protein is Membrane protein insertase YidC of Salmonella paratyphi C (strain RKS4594).